Reading from the N-terminus, the 905-residue chain is DNA mismatch repair protein MutS (905 aa).

The interval 1–95 is disordered; that stretch reads MELSLQGSLF…PAWGHHSQLK (95 aa). The segment covering 38–50 has biased composition (basic and acidic residues); it reads NLSDADLSKDALA. 721 to 728 serves as a coordination point for ATP; the sequence is GPNASGKS.

The protein belongs to the DNA mismatch repair MutS family.

In terms of biological role, this protein is involved in the repair of mismatches in DNA. It is possible that it carries out the mismatch recognition step. This protein has a weak ATPase activity. The polypeptide is DNA mismatch repair protein MutS (Synechococcus sp. (strain CC9902)).